Consider the following 917-residue polypeptide: Intercellular adhesion molecule 5 (917 aa).

An N-terminal signal peptide occupies residues 1-31 (MPGPSPGLRRALLGLWAALGLGILGISAVAL). Topologically, residues 32–833 (EPFWADLQPR…RITVRVAGPW (802 aa)) are extracellular. 9 Ig-like C2-type domains span residues 48 to 130 (GGSL…PLPS), 135 to 235 (GENF…SLIA), 242 to 329 (DSER…LLTL), 337 to 402 (GKMV…SSEL), 408 to 486 (PRLD…VTLT), 491 to 567 (PALD…VAVT), 572 to 651 (PSFE…NRHG), 665 to 738 (PQMD…RTVT), and 745 to 828 (PVVA…ITVR). N-linked (GlcNAc...) (high mannose) asparagine glycosylation is present at Asn54. Intrachain disulfides connect Cys55–Cys99 and Cys59–Cys103. Residues Asn74 and Asn137 are each glycosylated (N-linked (GlcNAc...) asparagine). Cys142 and Cys198 are oxidised to a cystine. Thr182 is modified (phosphothreonine). Asn195, Asn214, Asn274, Asn316, Asn371, and Asn397 each carry an N-linked (GlcNAc...) asparagine glycan. Cys249 and Cys302 form a disulfide bridge. A disulfide bridge links Cys344 with Cys383. 3 disulfide bridges follow: Cys415-Cys470, Cys498-Cys551, and Cys579-Cys644. Asn582 and Asn645 each carry an N-linked (GlcNAc...) asparagine glycan. A disulfide bond links Cys672 and Cys724. Residues Asn762, Asn793, and Asn794 are each glycosylated (N-linked (GlcNAc...) asparagine). A disulfide bridge connects residues Cys767 and Cys812. A helical transmembrane segment spans residues 834–854 (LWVAVGGAAGGAALLAAGAGL). Topologically, residues 855-917 (AFYVQSTACK…EVFAIQLTSS (63 aa)) are cytoplasmic. The segment covering 884-893 (GAGGTPGAEG) has biased composition (gly residues). Residues 884-908 (GAGGTPGAEGGAETPGTAESPADGE) are disordered.

It belongs to the immunoglobulin superfamily. ICAM family. Glycosylation at Asn-54 is critical for functional folding. As to expression, expressed on neurons in the most rostral segment of the mammalian brain, the telencephalon.

It localises to the membrane. Its function is as follows. ICAM proteins are ligands for the leukocyte adhesion protein LFA-1 (integrin alpha-L/beta-2). The chain is Intercellular adhesion molecule 5 (Icam5) from Mus musculus (Mouse).